Here is a 333-residue protein sequence, read N- to C-terminus: DNA-directed RNA polymerase subunit alpha (333 aa).

The alpha N-terminal domain (alpha-NTD) stretch occupies residues 1 to 234 (MQSSVNEFLT…QQLAAFVDLK (234 aa)). The tract at residues 248–333 (IDPILLRPVD…SLKKDDKATA (86 aa)) is alpha C-terminal domain (alpha-CTD).

The protein belongs to the RNA polymerase alpha chain family. In terms of assembly, homodimer. The RNAP catalytic core consists of 2 alpha, 1 beta, 1 beta' and 1 omega subunit. When a sigma factor is associated with the core the holoenzyme is formed, which can initiate transcription.

It carries out the reaction RNA(n) + a ribonucleoside 5'-triphosphate = RNA(n+1) + diphosphate. In terms of biological role, DNA-dependent RNA polymerase catalyzes the transcription of DNA into RNA using the four ribonucleoside triphosphates as substrates. The protein is DNA-directed RNA polymerase subunit alpha of Pseudomonas aeruginosa (strain UCBPP-PA14).